The sequence spans 305 residues: Nucleotide-binding protein Saro_2904 (305 aa).

15–22 (GLLGAGKT) is an ATP binding site. Residue 68–71 (DTRT) coordinates GTP.

It belongs to the RapZ-like family.

Functionally, displays ATPase and GTPase activities. The polypeptide is Nucleotide-binding protein Saro_2904 (Novosphingobium aromaticivorans (strain ATCC 700278 / DSM 12444 / CCUG 56034 / CIP 105152 / NBRC 16084 / F199)).